We begin with the raw amino-acid sequence, 165 residues long: Lymphocyte antigen 6K (165 aa).

The signal sequence occupies residues 1–17 (MALLALLLVVALPRVWT). A glycan (N-linked (GlcNAc...) asparagine) is linked at Asn-20. Residues 47–141 (ERENTFECQN…VFKEYAGSMG (95 aa)) enclose the UPAR/Ly6 domain. Gly-138 carries the GPI-anchor amidated glycine lipid modification. A propeptide spans 139–165 (SMGESCGGLWLAILLLLASIAAGLSLS) (removed in mature form).

Interacts with TEX101. Specifically expressed in testis (at protein level).

It localises to the secreted. The protein resides in the cytoplasm. The protein localises to the cell membrane. Its subcellular location is the cytoplasmic vesicle. It is found in the secretory vesicle. It localises to the acrosome. The protein resides in the membrane raft. Its function is as follows. Required for sperm migration into the oviduct and male fertility by controlling binding of sperm to zona pellucida. May play a role in cell growth. This Homo sapiens (Human) protein is Lymphocyte antigen 6K.